Here is a 207-residue protein sequence, read N- to C-terminus: Large ribosomal subunit protein uL4 (207 aa).

A disordered region spans residues 53-76; it reads TVSEVSGTTKKPFKQKGTGNARQG.

The protein belongs to the universal ribosomal protein uL4 family. Part of the 50S ribosomal subunit.

Functionally, one of the primary rRNA binding proteins, this protein initially binds near the 5'-end of the 23S rRNA. It is important during the early stages of 50S assembly. It makes multiple contacts with different domains of the 23S rRNA in the assembled 50S subunit and ribosome. Its function is as follows. Forms part of the polypeptide exit tunnel. The chain is Large ribosomal subunit protein uL4 from Rickettsia bellii (strain OSU 85-389).